The sequence spans 36 residues: Collagen alpha-2(I) chain (36 aa).

The tract at residues 1-36 (GSNGEPGSAGPPGPAGLRGLPGESGAVGPAGPPGSR) is disordered. Residues Pro-6 and Pro-12 each carry the 4-hydroxyproline modification. A compositionally biased stretch (low complexity) spans 15–29 (AGLRGLPGESGAVGP). Pro-33 carries the 4-hydroxyproline modification.

This sequence belongs to the fibrillar collagen family. As to quaternary structure, trimers of one alpha 2(I) and two alpha 1(I) chains. Proline residues at the third position of the tripeptide repeating unit (G-X-Y) are hydroxylated in some or all of the chains.

It localises to the secreted. It is found in the extracellular space. Its subcellular location is the extracellular matrix. In terms of biological role, type I collagen is a member of group I collagen (fibrillar forming collagen). In Brachylophosaurus canadensis (Campanian hadrosaur), this protein is Collagen alpha-2(I) chain.